The chain runs to 885 residues: Alanine--tRNA ligase (885 aa).

The Zn(2+) site is built by His-572, His-576, Cys-675, and His-679.

Belongs to the class-II aminoacyl-tRNA synthetase family. Requires Zn(2+) as cofactor.

Its subcellular location is the cytoplasm. It catalyses the reaction tRNA(Ala) + L-alanine + ATP = L-alanyl-tRNA(Ala) + AMP + diphosphate. In terms of biological role, catalyzes the attachment of alanine to tRNA(Ala) in a two-step reaction: alanine is first activated by ATP to form Ala-AMP and then transferred to the acceptor end of tRNA(Ala). Also edits incorrectly charged Ser-tRNA(Ala) and Gly-tRNA(Ala) via its editing domain. The chain is Alanine--tRNA ligase from Leifsonia xyli subsp. xyli (strain CTCB07).